We begin with the raw amino-acid sequence, 215 residues long: Thiamine-phosphate synthase (215 aa).

Residues 42–46 and aspartate 77 contribute to the 4-amino-2-methyl-5-(diphosphooxymethyl)pyrimidine site; that span reads QYREK. 2 residues coordinate Mg(2+): aspartate 78 and aspartate 97. Serine 116 serves as a coordination point for 4-amino-2-methyl-5-(diphosphooxymethyl)pyrimidine. 143-145 provides a ligand contact to 2-[(2R,5Z)-2-carboxy-4-methylthiazol-5(2H)-ylidene]ethyl phosphate; the sequence is TKS. Lysine 146 serves as a coordination point for 4-amino-2-methyl-5-(diphosphooxymethyl)pyrimidine. 2-[(2R,5Z)-2-carboxy-4-methylthiazol-5(2H)-ylidene]ethyl phosphate contacts are provided by residues glycine 174 and 194 to 195; that span reads IS.

The protein belongs to the thiamine-phosphate synthase family. The cofactor is Mg(2+).

It carries out the reaction 2-[(2R,5Z)-2-carboxy-4-methylthiazol-5(2H)-ylidene]ethyl phosphate + 4-amino-2-methyl-5-(diphosphooxymethyl)pyrimidine + 2 H(+) = thiamine phosphate + CO2 + diphosphate. The catalysed reaction is 2-(2-carboxy-4-methylthiazol-5-yl)ethyl phosphate + 4-amino-2-methyl-5-(diphosphooxymethyl)pyrimidine + 2 H(+) = thiamine phosphate + CO2 + diphosphate. The enzyme catalyses 4-methyl-5-(2-phosphooxyethyl)-thiazole + 4-amino-2-methyl-5-(diphosphooxymethyl)pyrimidine + H(+) = thiamine phosphate + diphosphate. It functions in the pathway cofactor biosynthesis; thiamine diphosphate biosynthesis; thiamine phosphate from 4-amino-2-methyl-5-diphosphomethylpyrimidine and 4-methyl-5-(2-phosphoethyl)-thiazole: step 1/1. Condenses 4-methyl-5-(beta-hydroxyethyl)thiazole monophosphate (THZ-P) and 2-methyl-4-amino-5-hydroxymethyl pyrimidine pyrophosphate (HMP-PP) to form thiamine monophosphate (TMP). The chain is Thiamine-phosphate synthase from Limosilactobacillus reuteri (strain DSM 20016) (Lactobacillus reuteri).